The primary structure comprises 307 residues: MAATLRELRGRIRSAGSIKKITKAQELIATSRIAKAQARVEAARPYAAEITNMLTELAGASALDHPLLVERKQPKRAGVLVVSSDRGLCGAYNANVLRRAEELFSLLRDEGKDPVLYVVGRKALGYFSFRQRTVVESWTGFSERPTYENAREIADTLVNAFMAGADDEGDDAGADGILGVDELHIVFTEFRSMLSQTAVARRAAPMEVEYVGEVETGPRTLYSFEPDPETLFDALLPRYIATRVYAALLEAAASESASRRRAMKSATDNADDLIKALTLAANRERQAQITQEISEIVGGANALAGSK.

It belongs to the ATPase gamma chain family. As to quaternary structure, F-type ATPases have 2 components, CF(1) - the catalytic core - and CF(0) - the membrane proton channel. CF(1) has five subunits: alpha(3), beta(3), gamma(1), delta(1), epsilon(1). CF(0) has three main subunits: a, b and c.

It localises to the cell membrane. Its function is as follows. Produces ATP from ADP in the presence of a proton gradient across the membrane. The gamma chain is believed to be important in regulating ATPase activity and the flow of protons through the CF(0) complex. In Mycolicibacterium smegmatis (strain ATCC 700084 / mc(2)155) (Mycobacterium smegmatis), this protein is ATP synthase gamma chain.